We begin with the raw amino-acid sequence, 911 residues long: Nitrate reductase [NADH], clone PBNBR1405 (911 aa).

A disordered region spans residues Met-1–Glu-68. The span at Lys-49–Ser-62 shows a compositional bias: basic and acidic residues. Residue Cys-191 coordinates Mo-molybdopterin. Positions Ser-539–Ile-614 constitute a Cytochrome b5 heme-binding domain. Residues His-574 and His-597 each coordinate heme. Residues Arg-654–Gln-766 form the FAD-binding FR-type domain. FAD contacts are provided by residues Arg-706–Thr-709, Val-723–Tyr-727, Phe-728, Phe-735, Leu-740–Ser-742, and Thr-793.

The protein belongs to the nitrate reductase family. As to quaternary structure, homodimer. It depends on FAD as a cofactor. Requires heme as cofactor. Mo-molybdopterin is required as a cofactor.

It carries out the reaction nitrite + NAD(+) + H2O = nitrate + NADH + H(+). Functionally, nitrate reductase is a key enzyme involved in the first step of nitrate assimilation in plants, fungi and bacteria. In Brassica napus (Rape), this protein is Nitrate reductase [NADH], clone PBNBR1405 (NIA1).